The chain runs to 30 residues: Thermophilic aminopeptidase 1 alpha chain (30 aa).

It belongs to the peptidase M42 family. 12 chains of two different but homologous types, alpha and beta, which can combine in various ratios. Requires a divalent metal cation as cofactor.

Its function is as follows. Metalloenzyme of broad specificity, releasing all N-terminal amino acids. The chain is Thermophilic aminopeptidase 1 alpha chain from Geobacillus stearothermophilus (Bacillus stearothermophilus).